Consider the following 139-residue polypeptide: Type II methyltransferase M.AquIB (139 aa).

The SAM-dependent MTase C5-type domain occupies 1 to 135 (MDIKNVHIKN…KAVSEQLLDV (135 aa)). Residues 38-58 (KTFGSTYRRLDPNQPSPTVTR) form a disordered region.

Belongs to the class I-like SAM-binding methyltransferase superfamily. C5-methyltransferase family. Heterodimer of an alpha and a beta subunit.

It carries out the reaction a 2'-deoxycytidine in DNA + S-adenosyl-L-methionine = a 5-methyl-2'-deoxycytidine in DNA + S-adenosyl-L-homocysteine + H(+). In terms of biological role, a methylase, recognizes the double-stranded sequence 5'-CYCGRG-3', methylates C-1 on both strands, and protects the DNA from cleavage by the AquI endonuclease. The protein is Type II methyltransferase M.AquIB (aquIMB) of Picosynechococcus sp. (strain ATCC 27264 / PCC 7002 / PR-6) (Agmenellum quadruplicatum).